The sequence spans 286 residues: ATP synthase gamma chain (286 aa).

The protein belongs to the ATPase gamma chain family. As to quaternary structure, F-type ATPases have 2 components, CF(1) - the catalytic core - and CF(0) - the membrane proton channel. CF(1) has five subunits: alpha(3), beta(3), gamma(1), delta(1), epsilon(1). CF(0) has three main subunits: a, b and c.

Its subcellular location is the cell membrane. Produces ATP from ADP in the presence of a proton gradient across the membrane. The gamma chain is believed to be important in regulating ATPase activity and the flow of protons through the CF(0) complex. This is ATP synthase gamma chain from Ureaplasma urealyticum serovar 10 (strain ATCC 33699 / Western).